The following is a 380-amino-acid chain: Acyl-lipid (9+3)-(E)-desaturase (380 aa).

Residues Met-1–Tyr-25 are disordered. The span at Val-9–Asn-18 shows a compositional bias: polar residues. Transmembrane regions (helical) follow at residues Leu-52–Phe-72 and Ala-81–Ile-101. The Histidine box-1 signature appears at His-103–His-107. The short motif at His-139–His-143 is the Histidine box-2 element. 3 consecutive transmembrane segments (helical) span residues Ile-177–Ser-197, Ile-223–Val-243, and Val-247–Val-267. Residues His-313–His-317 carry the Histidine box-3 motif.

The protein belongs to the fatty acid desaturase type 1 family.

It is found in the membrane. It carries out the reaction a (9Z)-octadecenoyl-containing glycerolipid + 2 Fe(II)-[cytochrome b5] + O2 + 2 H(+) = a (9Z,12E)-octadecadienoyl-containing glycerolipid + 2 Fe(III)-[cytochrome b5] + 2 H2O. It catalyses the reaction a (9Z)-hexadecenoyl-containing glycerolipid + 2 Fe(II)-[cytochrome b5] + O2 + 2 H(+) = a (9Z,12E)-hexadecadienoyl-containing glycerolipid + 2 Fe(III)-[cytochrome b5] + 2 H2O. Involved in the biosynthesis of dimorphecolic acid (9-OH-18:2(10E,12E)). Converts oleic acid (18:1(9Z)) into 18:2(9Z,12E) and probably palmitoleic acid (16:1(9Z)) into 16:2(9Z,12E). Very limited ability to catalyze (Z)-delta(12) desaturation. This Dimorphotheca sinuata (African daisy) protein is Acyl-lipid (9+3)-(E)-desaturase.